The primary structure comprises 400 residues: Involucrin (400 aa).

3 disordered regions span residues 1-196, 273-312, and 333-381; these read MSQQ…HLKQ, KEEVHLEQQQQETQELQQHQGAGILEQKLHQEKAQSEQQL, and KRDE…KGEV. Low complexity-rich tracts occupy residues 78-159, 169-186, and 279-292; these read QQQQ…QQHQ, EQQQQEPQKQELHLGQQE, and EQQQQETQELQQHQ. Over residues 333-344 the composition is skewed to basic and acidic residues; the sequence is KRDEQLGKKEEQ. Residues 346–358 are compositionally biased toward low complexity; that stretch reads LEPSEQQEGLLEQ.

The protein belongs to the involucrin family. Directly or indirectly cross-linked to cornifelin (CNFN). In terms of processing, substrate of transglutaminase. Specific glutamines or lysines are cross-linked to keratins, desmoplakin and to inter involucrin molecules. In terms of tissue distribution, keratinocytes of epidermis and other stratified squamous epithelia.

It is found in the cytoplasm. In terms of biological role, part of the insoluble cornified cell envelope (CE) of stratified squamous epithelia. This chain is Involucrin (IVL), found in Tupaia glis (Common tree shrew).